A 420-amino-acid polypeptide reads, in one-letter code: Transcription activator GLK1 (420 aa).

Positions 74 to 152 are disordered; it reads GDFSNHMNAS…NRISNNEGKR (79 aa). The span at 106–117 shows a compositional bias: basic and acidic residues; sequence KGEEVVSKRDDV. Residues 135-147 are compositionally biased toward low complexity; it reads SSSASSKNNRISN. A DNA-binding region (myb-like GARP) is located at residues 150–209; it reads GKRKVKVDWTPELHRRFVEAVEQLGVDKAVPSRILELMGVHCLTRHNVASHLQKYRSHRK.

In terms of assembly, interacts with NAC92. Expressed in rosette and cauline leaves. Expressed at low levels in cotyledons and shoots.

The protein localises to the nucleus. Its function is as follows. Transcriptional activator that functions with GLK2 to promote chloroplast development. Acts as an activator of nuclear photosynthetic genes involved in chlorophyll biosynthesis, light harvesting, and electron transport. Acts in a cell-autonomous manner to coordinate and maintain the photosynthetic apparatus within individual cells. May function in photosynthetic capacity optimization by integrating responses to variable environmental and endogenous cues. Prevents premature senescence. This Arabidopsis thaliana (Mouse-ear cress) protein is Transcription activator GLK1 (GLK1).